The sequence spans 397 residues: Argininosuccinate synthase (397 aa).

8 to 16 (AYSGGLDTS) is an ATP binding site. Positions 86 and 91 each coordinate L-citrulline. Gly-116 provides a ligand contact to ATP. L-aspartate is bound by residues Thr-118, Asn-122, and Asp-123. An L-citrulline-binding site is contributed by Asn-122. L-citrulline contacts are provided by Arg-126, Ser-175, Ser-184, Glu-260, and Tyr-272.

Belongs to the argininosuccinate synthase family. Type 1 subfamily. Homotetramer.

The protein localises to the cytoplasm. The catalysed reaction is L-citrulline + L-aspartate + ATP = 2-(N(omega)-L-arginino)succinate + AMP + diphosphate + H(+). Its pathway is amino-acid biosynthesis; L-arginine biosynthesis; L-arginine from L-ornithine and carbamoyl phosphate: step 2/3. This chain is Argininosuccinate synthase, found in Clostridium botulinum (strain Kyoto / Type A2).